The following is a 389-amino-acid chain: Nicotinate phosphoribosyltransferase (389 aa).

H216 carries the post-translational modification Phosphohistidine; by autocatalysis.

This sequence belongs to the NAPRTase family. Transiently phosphorylated on a His residue during the reaction cycle. Phosphorylation strongly increases the affinity for substrates and increases the rate of nicotinate D-ribonucleotide production. Dephosphorylation regenerates the low-affinity form of the enzyme, leading to product release.

It carries out the reaction nicotinate + 5-phospho-alpha-D-ribose 1-diphosphate + ATP + H2O = nicotinate beta-D-ribonucleotide + ADP + phosphate + diphosphate. Its pathway is cofactor biosynthesis; NAD(+) biosynthesis; nicotinate D-ribonucleotide from nicotinate: step 1/1. In terms of biological role, catalyzes the synthesis of beta-nicotinate D-ribonucleotide from nicotinate and 5-phospho-D-ribose 1-phosphate at the expense of ATP. The sequence is that of Nicotinate phosphoribosyltransferase from Ralstonia pickettii (strain 12J).